A 152-amino-acid polypeptide reads, in one-letter code: Natriuretic peptides A (152 aa).

Positions 1–24 are cleaved as a signal peptide; the sequence is MGSFSITKGFFLFLAFWLPGHIGA. 2 consecutive propeptides follow at residues 25 to 122 and 92 to 102; these read NPVY…AGPR and DGGALGRGPWD. Residues 54-104 form a disordered region; it reads DEVMPPQALSEQTDEAGAALSSLSEVPPWTGEVNPSQRDGGALGRGPWDPS. Position 128 is a phosphoserine (Ser128). Cys129 and Cys145 are joined by a disulfide. Positions 146-150 are important for degradation of atrial natriuretic peptide by IDE; it reads NSFRY.

Belongs to the natriuretic peptide family. As to quaternary structure, homodimer; disulfide-linked antiparallel dimer. Post-translationally, the precursor molecule is proteolytically cleaved by CORIN at Arg-122 to produce the atrial natriuretic peptide. Undergoes further proteolytic cleavage by unknown proteases to give rise to long-acting natriuretic peptide, vessel dilator and kaliuretic peptide. Additional processing gives rise to the auriculin and atriopeptin peptides. In the kidneys, alternative processing by an unknown protease results in the peptide urodilatin. In terms of processing, cleavage by MME initiates degradation of the factor and thereby regulates its activity. Degradation by IDE results in reduced activation of NPR1 (in vitro). During IDE degradation, the resulting products can temporarily stimulate NPR2 to produce cGMP, before the fragments are completely degraded and inactivated by IDE (in vitro). Degraded by IDE. Post-translationally, phosphorylation on Ser-128 decreases vasorelaxant activity. High levels of expression in the atria compared to the ventricles. Very low levels of expression detected in extracardiac tissues such as the brain, hypothalamus, pituitary, lung and aorta. In terms of tissue distribution, atria (at protein level). As to expression, high levels of expression in the atria with very low levels of expression in the ventricles (at protein level). Relatively low levels of expression detected in the brain compared to the atria (at protein level).

The protein localises to the secreted. It localises to the perikaryon. It is found in the cell projection. In terms of biological role, hormone that plays a key role in mediating cardio-renal homeostasis, and is involved in vascular remodeling and regulating energy metabolism. Acts by specifically binding and stimulating NPR1 to produce cGMP, which in turn activates effector proteins, such as PRKG1, that drive various biological responses. Regulates vasodilation, natriuresis, diuresis and aldosterone synthesis and is therefore essential for regulating blood pressure, controlling the extracellular fluid volume and maintaining the fluid-electrolyte balance. Also involved in inhibiting cardiac remodeling and cardiac hypertrophy by inducing cardiomyocyte apoptosis and attenuating the growth of cardiomyocytes and fibroblasts. Plays a role in female pregnancy by promoting trophoblast invasion and spiral artery remodeling in uterus, and thus prevents pregnancy-induced hypertension. In adipose tissue, acts in various cGMP- and PKG-dependent pathways to regulate lipid metabolism and energy homeostasis. This includes up-regulating lipid metabolism and mitochondrial oxygen utilization by activating the AMP-activated protein kinase (AMPK), and increasing energy expenditure by acting via MAPK11 to promote the UCP1-dependent thermogenesis of brown adipose tissue. Binds the clearance receptor NPR3 which removes the hormone from circulation. May have a role in cardio-renal homeostasis through regulation of natriuresis, diuresis, vasodilation, and inhibiting aldosterone synthesis. In vitro, promotes the production of cGMP and induces vasodilation. May promote natriuresis, at least in part, by enhancing prostaglandin E2 synthesis resulting in the inhibition of renal Na+-K+-ATPase. However reports on the involvement of this peptide in mammal blood volume and blood pressure homeostasis are conflicting; according to a report, in vivo it is not sufficient to activate cGMP and does not inhibit collecting duct transport nor effect diuresis and natriuresis. Appears to bind to specific receptors that are distinct from the receptors bound by atrial natriuretic peptide and vessel dilator. Possibly enhances protein excretion in urine by decreasing proximal tubular protein reabsorption. Functionally, may have a role in cardio-renal homeostasis through regulation of natriuresis, diuresis, and vasodilation. In vitro, promotes the production of cGMP and induces vasodilation. May promote natriuresis, at least in part, by enhancing prostaglandin E2 synthesis resulting in the inhibition of renal Na+-K+-ATPase. However reports on the involvement of this peptide in mammal blood volume and blood pressure homeostasis are conflicting; according to a report, in vivo it is not sufficient to activate cGMP and does not inhibit collecting duct transport nor effect diuresis and natriuresis. Appears to bind to specific receptors that are distinct from the receptors bound by the atrial natriuretic and long-acting natriuretic peptides. Possibly functions in protein excretion in urine by maintaining the integrity of the proximal tubules and enhancing protein excretion by decreasing proximal tubular protein reabsorption. Its function is as follows. May have a role in cardio-renal homeostasis through regulation of diuresis and inhibiting aldosterone synthesis. In vitro, promotes the production of cGMP and induces vasodilation. May promote natriuresis, at least in part, by enhancing prostaglandin E2 synthesis resulting in the inhibition of renal Na+-K+-ATPase. May have a role in potassium excretion but not sodium excretion (natriuresis). Possibly enhances protein excretion in urine by decreasing proximal tubular protein reabsorption. In terms of biological role, hormone produced in the kidneys that appears to be important for maintaining cardio-renal homeostasis. Mediates vasodilation, natriuresis and diuresis primarily in the renal system, in order to maintain the extracellular fluid volume and control the fluid-electrolyte balance. Specifically binds and stimulates cGMP production by renal transmembrane receptors, likely NPR1. Urodilatin not ANP, may be the natriuretic peptide responsible for the regulation of sodium and water homeostasis in the kidney. May have a role in cardio-renal homeostasis through regulation of natriuresis and vasodilation. In vivo promotes natriuresis and in vitro, vasodilates renal artery strips. Functionally, may have a role in cardio-renal homeostasis through regulation of regulation of natriuresis and vasodilation. In vivo promotes natriuresis. In vitro, vasodilates intestinal smooth muscle but not smooth muscle strips. Its function is as follows. May have a role in cardio-renal homeostasis through regulation of natriuresis and vasodilation. In vivo promotes natriuresis. In vitro, selectively vasodilates intestinal and vascular smooth muscle strips. In terms of biological role, may have a role in cardio-renal homeostasis through regulation of natriuresis and vasodilation. In vivo promotes natriuresis. In vitro, selectively vasodilates intestinal smooth muscle but not vascular smooth muscle strips. The chain is Natriuretic peptides A (Nppa) from Rattus norvegicus (Rat).